The primary structure comprises 62 residues: Kininogen-1 (62 aa).

The N-terminal stretch at 1–22 (MDILKKSLFLVLFLGLVSFSIC) is a signal peptide. A disordered region spans residues 24 to 62 (EEKRDTEEEENDDEIEEESEEKKREAPERPPGFTPFRIY). Residues 30–42 (EEEENDDEIEEES) show a composition bias toward acidic residues. 4-hydroxyproline; partial is present on proline 54. Position 62 is a sulfotyrosine (tyrosine 62).

This sequence belongs to the frog skin active peptide (FSAP) family. Bradykinin-related peptide subfamily. Expressed by the skin glands.

Its subcellular location is the secreted. In terms of biological role, inhibits ACE with a Ki of 1.6 uM, and targets B2 bradykinin receptor (BDKRB2). Provokes contraction of smooth muscle preparation (ileum). In vivo, induces an early hyperalgesic effects in living rats after intraplantar injection. This chain is Kininogen-1, found in Phyllomedusa sauvagei (Sauvage's leaf frog).